The sequence spans 323 residues: Ribosomal RNA small subunit methyltransferase H (323 aa).

S-adenosyl-L-methionine is bound by residues 39 to 41 (GGY), D57, F84, D103, and Q110.

This sequence belongs to the methyltransferase superfamily. RsmH family.

Its subcellular location is the cytoplasm. The catalysed reaction is cytidine(1402) in 16S rRNA + S-adenosyl-L-methionine = N(4)-methylcytidine(1402) in 16S rRNA + S-adenosyl-L-homocysteine + H(+). Functionally, specifically methylates the N4 position of cytidine in position 1402 (C1402) of 16S rRNA. The sequence is that of Ribosomal RNA small subunit methyltransferase H from Gluconobacter oxydans (strain 621H) (Gluconobacter suboxydans).